The primary structure comprises 360 residues: DNA replication and repair protein RecF (360 aa).

Glycine 30–threonine 37 contributes to the ATP binding site.

It belongs to the RecF family.

Its subcellular location is the cytoplasm. Its function is as follows. The RecF protein is involved in DNA metabolism; it is required for DNA replication and normal SOS inducibility. RecF binds preferentially to single-stranded, linear DNA. It also seems to bind ATP. The polypeptide is DNA replication and repair protein RecF (Acinetobacter baumannii (strain SDF)).